Reading from the N-terminus, the 178-residue chain is Large ribosomal subunit protein uL6 (178 aa).

It belongs to the universal ribosomal protein uL6 family. As to quaternary structure, part of the 50S ribosomal subunit.

In terms of biological role, this protein binds to the 23S rRNA, and is important in its secondary structure. It is located near the subunit interface in the base of the L7/L12 stalk, and near the tRNA binding site of the peptidyltransferase center. This chain is Large ribosomal subunit protein uL6, found in Streptococcus agalactiae serotype V (strain ATCC BAA-611 / 2603 V/R).